Consider the following 122-residue polypeptide: Large ribosomal subunit protein uL18 (122 aa).

The disordered stretch occupies residues 1–25 (MSTLSRKQQTQKRHRRLRRHLSGTA). Residues 9 to 21 (QTQKRHRRLRRHL) show a composition bias toward basic residues.

The protein belongs to the universal ribosomal protein uL18 family. In terms of assembly, part of the 50S ribosomal subunit; part of the 5S rRNA/L5/L18/L25 subcomplex. Contacts the 5S and 23S rRNAs.

This is one of the proteins that bind and probably mediate the attachment of the 5S RNA into the large ribosomal subunit, where it forms part of the central protuberance. The chain is Large ribosomal subunit protein uL18 from Synechococcus sp. (strain CC9311).